A 107-amino-acid polypeptide reads, in one-letter code: Replication initiation control protein YabA (107 aa).

Residues His-81, Cys-83, Cys-97, and Cys-100 each coordinate Zn(2+).

It belongs to the YabA family. Homotetramer. Interacts with both DnaA and DnaN, acting as a bridge between these two proteins. Zn(2+) is required as a cofactor.

It localises to the cytoplasm. It is found in the nucleoid. Involved in control of chromosome replication initiation. Inhibits the cooperative binding of DnaA to the oriC region, thus negatively regulating initiation of chromosome replication. Inhibits the ability of DnaA-ATP to form a helix on DNA; does not disassemble preformed DnaA-DNA helices. Decreases the residence time of DnaA on the chromosome at its binding sites (oriC, replication forks and promoter-binding sites). Tethers DnaA to the replication machinery via the DNA polymerase beta sliding clamp subunit (dnaN). Associates with oriC and other DnaA targets on the chromosome in a DnaA-dependent manner. This chain is Replication initiation control protein YabA, found in Streptococcus equi subsp. equi (strain 4047).